A 617-amino-acid polypeptide reads, in one-letter code: V-type proton ATPase catalytic subunit A (617 aa).

At Asp2 the chain carries N-acetylalanine. Thr136 bears the Phosphothreonine mark. 250–257 (GAFGCGKT) provides a ligand contact to ATP. Ser384 carries the post-translational modification Phosphoserine; by AMPK.

The protein belongs to the ATPase alpha/beta chains family. In terms of assembly, V-ATPase is a heteromultimeric enzyme made up of two complexes: the ATP-hydrolytic V1 complex and the proton translocation V0 complex. The V1 complex consists of three catalytic AB heterodimers that form a heterohexamer, three peripheral stalks each consisting of EG heterodimers, one central rotor including subunits D and F, and the regulatory subunits C and H. The proton translocation complex V0 consists of the proton transport subunit a, a ring of proteolipid subunits c9c'', rotary subunit d, subunits e and f, and the accessory subunits ATP6AP1/Ac45 and ATP6AP2/PRR. Interacts with the V0 complex V-ATPase subunit a4 ATP6V0A4. Interacts with WFS1. Interacts with alpha-crystallin B chain/CRYAB and with MTOR, forming a ternary complex. As to quaternary structure, (Microbial infection) Interacts with Rabies virus protein M; this interaction promotes virion uncoating. In terms of processing, phosphorylation at Ser-384 by AMPK down-regulates its enzyme activity. High expression in the skin.

It localises to the cytoplasm. Its subcellular location is the cytosol. The protein resides in the cytoplasmic vesicle. It is found in the secretory vesicle. The protein localises to the clathrin-coated vesicle membrane. It localises to the lysosome. The catalysed reaction is ATP + H2O + 4 H(+)(in) = ADP + phosphate + 5 H(+)(out). ATP hydrolysis occurs at the interface between the nucleotide-binding domains of subunits A and B. ATP hydrolysis triggers a conformational change in the subunits D and F, which induces a shift of subunit d. The c-ring is subsequently rotated and results in a continuous proton translocation across the membrane. In terms of biological role, catalytic subunit of the V1 complex of vacuolar(H+)-ATPase (V-ATPase), a multisubunit enzyme composed of a peripheral complex (V1) that hydrolyzes ATP and a membrane integral complex (V0) that translocates protons. V-ATPase is responsible for acidifying and maintaining the pH of intracellular compartments and in some cell types, is targeted to the plasma membrane, where it is responsible for acidifying the extracellular environment. In aerobic conditions, involved in intracellular iron homeostasis, thus triggering the activity of Fe(2+) prolyl hydroxylase (PHD) enzymes, and leading to HIF1A hydroxylation and subsequent proteasomal degradation. May play a role in neurite development and synaptic connectivity. (Microbial infection) Plays an important role in virion uncoating during Rabies virus replication after membrane fusion. Specifically, participates in the dissociation of incoming viral matrix M proteins uncoating through direct interaction. This is V-type proton ATPase catalytic subunit A (ATP6V1A) from Homo sapiens (Human).